Here is a 113-residue protein sequence, read N- to C-terminus: Beta-microseminoprotein A1 (113 aa).

An N-terminal signal peptide occupies residues 1 to 20 (MNVLLGGLVIFATFVTLCNG). Disulfide bonds link Cys-22-Cys-70, Cys-38-Cys-62, Cys-57-Cys-93, Cys-60-Cys-69, and Cys-84-Cys-107.

This sequence belongs to the beta-microseminoprotein family.

Its subcellular location is the secreted. The chain is Beta-microseminoprotein A1 (MSPA) from Saguinus oedipus (Cotton-top tamarin).